The chain runs to 327 residues: GMP reductase (327 aa).

Cys175 functions as the Thioimidate intermediate in the catalytic mechanism. Position 204–227 (204–227) interacts with NADP(+); sequence IIADGGIRTPGDIAKSIRFGATMV.

This sequence belongs to the IMPDH/GMPR family. GuaC type 2 subfamily.

It carries out the reaction IMP + NH4(+) + NADP(+) = GMP + NADPH + 2 H(+). Its function is as follows. Catalyzes the irreversible NADPH-dependent deamination of GMP to IMP. It functions in the conversion of nucleobase, nucleoside and nucleotide derivatives of G to A nucleotides, and in maintaining the intracellular balance of A and G nucleotides. The polypeptide is GMP reductase (Clostridium acetobutylicum (strain ATCC 824 / DSM 792 / JCM 1419 / IAM 19013 / LMG 5710 / NBRC 13948 / NRRL B-527 / VKM B-1787 / 2291 / W)).